The chain runs to 150 residues: Large ribosomal subunit protein uL13 (150 aa).

Residues 129–150 (AEHPHAAQQPKPLQLDPAATAQ) are disordered.

It belongs to the universal ribosomal protein uL13 family. In terms of assembly, part of the 50S ribosomal subunit.

Functionally, this protein is one of the early assembly proteins of the 50S ribosomal subunit, although it is not seen to bind rRNA by itself. It is important during the early stages of 50S assembly. The protein is Large ribosomal subunit protein uL13 of Synechococcus sp. (strain WH7803).